We begin with the raw amino-acid sequence, 93 residues long: Defensin-like protein 209 (93 aa).

The N-terminal stretch at 1-19 is a signal peptide; sequence MKITILFLTLLVLSSSCTS. 3 cysteine pairs are disulfide-bonded: Cys63/Cys80, Cys66/Cys85, and Cys70/Cys87.

The protein belongs to the DEFL family.

It is found in the secreted. This Arabidopsis thaliana (Mouse-ear cress) protein is Defensin-like protein 209.